The primary structure comprises 148 residues: Small ribosomal subunit protein bS6 (148 aa).

Residues 96–148 (HEEGQSAMLTRRDDRRERDGDDRPRRREGGFDRGDRGDRGPRRPRDNEAGEGA) form a disordered region.

The protein belongs to the bacterial ribosomal protein bS6 family.

In terms of biological role, binds together with bS18 to 16S ribosomal RNA. The sequence is that of Small ribosomal subunit protein bS6 from Brucella abortus biovar 1 (strain 9-941).